Reading from the N-terminus, the 131-residue chain is Small ribosomal subunit protein eS6 (131 aa).

Belongs to the eukaryotic ribosomal protein eS6 family.

The polypeptide is Small ribosomal subunit protein eS6 (Halobacterium salinarum (strain ATCC 29341 / DSM 671 / R1)).